Here is a 573-residue protein sequence, read N- to C-terminus: Dihydroxy-acid dehydratase (573 aa).

Basic and acidic residues predominate over residues 1–14; sequence MTEKSPKPHKRSDA. The tract at residues 1–21 is disordered; the sequence is MTEKSPKPHKRSDAITEGPNR. Cysteine 55 contributes to the [2Fe-2S] cluster binding site. Aspartate 87 contributes to the Mg(2+) binding site. Cysteine 128 is a [2Fe-2S] cluster binding site. Mg(2+) is bound by residues aspartate 129 and lysine 130. Position 130 is an N6-carboxylysine (lysine 130). Cysteine 200 contributes to the [2Fe-2S] cluster binding site. Glutamate 450 provides a ligand contact to Mg(2+). The Proton acceptor role is filled by serine 476.

This sequence belongs to the IlvD/Edd family. In terms of assembly, homodimer. [2Fe-2S] cluster serves as cofactor. It depends on Mg(2+) as a cofactor.

It catalyses the reaction (2R)-2,3-dihydroxy-3-methylbutanoate = 3-methyl-2-oxobutanoate + H2O. The enzyme catalyses (2R,3R)-2,3-dihydroxy-3-methylpentanoate = (S)-3-methyl-2-oxopentanoate + H2O. It participates in amino-acid biosynthesis; L-isoleucine biosynthesis; L-isoleucine from 2-oxobutanoate: step 3/4. The protein operates within amino-acid biosynthesis; L-valine biosynthesis; L-valine from pyruvate: step 3/4. Its function is as follows. Functions in the biosynthesis of branched-chain amino acids. Catalyzes the dehydration of (2R,3R)-2,3-dihydroxy-3-methylpentanoate (2,3-dihydroxy-3-methylvalerate) into 2-oxo-3-methylpentanoate (2-oxo-3-methylvalerate) and of (2R)-2,3-dihydroxy-3-methylbutanoate (2,3-dihydroxyisovalerate) into 2-oxo-3-methylbutanoate (2-oxoisovalerate), the penultimate precursor to L-isoleucine and L-valine, respectively. This chain is Dihydroxy-acid dehydratase, found in Koribacter versatilis (strain Ellin345).